A 513-amino-acid chain; its full sequence is ATP synthase subunit alpha (513 aa).

169–176 (GDRQIGKS) contacts ATP.

The protein belongs to the ATPase alpha/beta chains family. As to quaternary structure, F-type ATPases have 2 components, CF(1) - the catalytic core - and CF(0) - the membrane proton channel. CF(1) has five subunits: alpha(3), beta(3), gamma(1), delta(1), epsilon(1). CF(0) has three main subunits: a(1), b(2) and c(9-12). The alpha and beta chains form an alternating ring which encloses part of the gamma chain. CF(1) is attached to CF(0) by a central stalk formed by the gamma and epsilon chains, while a peripheral stalk is formed by the delta and b chains.

Its subcellular location is the cell inner membrane. It carries out the reaction ATP + H2O + 4 H(+)(in) = ADP + phosphate + 5 H(+)(out). Produces ATP from ADP in the presence of a proton gradient across the membrane. The alpha chain is a regulatory subunit. The sequence is that of ATP synthase subunit alpha from Colwellia psychrerythraea (strain 34H / ATCC BAA-681) (Vibrio psychroerythus).